Reading from the N-terminus, the 349-residue chain is Pinopsin (349 aa).

The span at 1–16 (MDPTNSPQEPPHTSTP) shows a compositional bias: polar residues. The tract at residues 1–22 (MDPTNSPQEPPHTSTPGPFDGP) is disordered. Over 1-32 (MDPTNSPQEPPHTSTPGPFDGPQWPHQAPRGM) the chain is Extracellular. Residues 33 to 57 (YLSVAVLMGIVVISASVVNGLVIVV) traverse the membrane as a helical segment. Topologically, residues 58-69 (SIRYKKLRSPLN) are cytoplasmic. Residues 70 to 94 (YILVNLAMADLLVTLCGSSVSFSNN) traverse the membrane as a helical segment. At 95–109 (INGFFVFGKRLCELE) the chain is on the extracellular side. Residues cysteine 106 and cysteine 183 are joined by a disulfide bond. The helical transmembrane segment at 110–129 (GFMVSLTGIVGLWSLAILAL) threads the bilayer. Residues 130 to 148 (ERYVVVCRPLGDFRFQHRH) lie on the Cytoplasmic side of the membrane. A helical membrane pass occupies residues 149–172 (AVTGCAFTWVWSLLWTTPPLLGWS). Over 173-196 (SYVPEGLRTSCGPNWYTGGSNNNS) the chain is Extracellular. An N-linked (GlcNAc...) asparagine glycan is attached at asparagine 194. Residues 197–224 (YILTLFVTCFVMPLSLILFSYANLLMTL) traverse the membrane as a helical segment. The Cytoplasmic portion of the chain corresponds to 225 to 246 (RAAAAQQQESDTTQQAERQVTR). A helical transmembrane segment spans residues 247–270 (MVVAMVMAFLICWLPYTTFALVVA). At 271–278 (TNKDIAIQ) the chain is on the extracellular side. A helical membrane pass occupies residues 279 to 303 (PALASLPSYFSKTATVYNPIIYVFM). The residue at position 290 (lysine 290) is an N6-(retinylidene)lysine. Over 304–349 (NKQFQSCLLKMLCCGHHPRGTGRTAPAAPASPTDGLRNKVTPSHPV) the chain is Cytoplasmic. 2 S-palmitoyl cysteine lipidation sites follow: cysteine 316 and cysteine 317. Residues 325-349 (GRTAPAAPASPTDGLRNKVTPSHPV) form a disordered region.

Belongs to the G-protein coupled receptor 1 family. Opsin subfamily. Phosphorylated on some or all of the serine and threonine residues present in the C-terminal region. In terms of tissue distribution, pineal gland.

Its subcellular location is the membrane. Its function is as follows. Produces a slow and prolonged phototransduction response consistent with the non-visual function of pineal photoreception. The polypeptide is Pinopsin (Columba livia (Rock dove)).